A 1130-amino-acid polypeptide reads, in one-letter code: Putative beta-hexosaminidase (1130 aa).

An N-terminal signal peptide occupies residues 1–23 (MKWVKSGVGILGILLIICHAVTS). 2 stretches are compositionally biased toward low complexity: residues 1001 to 1030 (PGQMRALGQQAGQALRGQGQQTGQQTLPAQ) and 1037 to 1072 (LTGQAAGTGVAGQSGQQPSAAGQGTQQGLPGQQRTG). 2 disordered regions span residues 1001 to 1075 (PGQM…GVVP) and 1102 to 1130 (QMRGQGQIPQTQGAVAGAGQSRVPQQQAG).

This sequence belongs to the glycosyl hydrolase 20 family. Prismatic layer of shell (at protein level). Expressed primarily in the mantle with highest level in the mantle edge and lower level in the mantle pallium.

The protein resides in the secreted. It carries out the reaction Hydrolysis of terminal non-reducing N-acetyl-D-hexosamine residues in N-acetyl-beta-D-hexosaminides.. Its pathway is glycan degradation; chitin degradation. The protein is Putative beta-hexosaminidase of Pinctada maxima (Silver-lipped pearl oyster).